A 65-amino-acid polypeptide reads, in one-letter code: Large ribosomal subunit protein bL33m (65 aa).

The transit peptide at 1–8 (MFLTTANL) directs the protein to the mitochondrion.

This sequence belongs to the bacterial ribosomal protein bL33 family. Component of the mitochondrial ribosome large subunit (39S) which comprises a 16S rRNA and about 50 distinct proteins.

The protein localises to the mitochondrion. The chain is Large ribosomal subunit protein bL33m (mrpl33) from Tetraodon nigroviridis (Spotted green pufferfish).